The following is a 260-amino-acid chain: Proteasome subunit alpha (260 aa).

It belongs to the peptidase T1A family. As to quaternary structure, the 20S proteasome core is composed of 14 alpha and 14 beta subunits that assemble into four stacked heptameric rings, resulting in a barrel-shaped structure. The two inner rings, each composed of seven catalytic beta subunits, are sandwiched by two outer rings, each composed of seven alpha subunits. The catalytic chamber with the active sites is on the inside of the barrel. Has a gated structure, the ends of the cylinder being occluded by the N-termini of the alpha-subunits. Is capped at one or both ends by the proteasome regulatory ATPase, PAN.

It localises to the cytoplasm. The formation of the proteasomal ATPase PAN-20S proteasome complex, via the docking of the C-termini of PAN into the intersubunit pockets in the alpha-rings, triggers opening of the gate for substrate entry. Interconversion between the open-gate and close-gate conformations leads to a dynamic regulation of the 20S proteasome proteolysis activity. Its function is as follows. Component of the proteasome core, a large protease complex with broad specificity involved in protein degradation. The sequence is that of Proteasome subunit alpha from Thermococcus kodakarensis (strain ATCC BAA-918 / JCM 12380 / KOD1) (Pyrococcus kodakaraensis (strain KOD1)).